Consider the following 430-residue polypeptide: MKLKLSSISMNHKNVLLIKLISAILISFFAFRLFILHSSEFSPIFASVTGKFEARFLPPEIIVPENEDLIPQDIEVEKCDLFAGKWIPDSVGPIYTNKSCGSLIDGHQNCITNGRPDLDFLYWKWKPHDCLLPRFDPRRFLQLMRHKSWAFIGDSISRNHVESLLCMLSTIEEPVEVYHDMEYKSKRWHFPLHNLTVSNIWSPFLVQAAIFEDSNGVSTASVQLHLDRLDETWTSLMPSFDYAIISTGKWFLKSAIYHENAKLVGCHNCQEKPHIEELGFDYAYNASLHNVMDFLAAEDNSKGTVFFRTSTPDHFQNGEWHSGGTCKQTEPVSDEEIEIKDVHKILKDIEIDQFKRAVREKTNQDGGNLKLLDFTRMLLTRPDGHPGEYRQFRPFDKDKNAKVQNDCLHWCLPGPFDYLNDVILETIVNG.

Residues 15 to 35 form a helical; Signal-anchor for type II membrane protein membrane-spanning segment; the sequence is VLLIKLISAILISFFAFRLFI. Residues 153-155 carry the GDS motif motif; that stretch reads GDS. The DCXHWCLPGXXDXWN motif signature appears at 406–420; it reads DCLHWCLPGPFDYLN.

It belongs to the PC-esterase family. TBL subfamily.

It is found in the membrane. Its function is as follows. May act as a bridging protein that binds pectin and other cell wall polysaccharides. Probably involved in maintaining esterification of pectins. May be involved in the specific O-acetylation of cell wall polymers. In Arabidopsis thaliana (Mouse-ear cress), this protein is Protein trichome birefringence-like 24 (TBL24).